A 264-amino-acid polypeptide reads, in one-letter code: MKIEAVIFDWAGTTVDYGCFAPLEVFMKIFHKRGVEITVEEARKPMGLLKIDHVRALTEMPRIADEWKRVFGQLPTEVDIHEMYEEFEEILFSILPSYATPIEGVKEVIASLRERGIKIGSTTGYTREMMDIVAKEAALQGYKPDFLVTPDDVPAGRPYPWMCYKNAMELDVYPMNHMIKVGDTVSDMKEGRNAGMWTVGVILGSSELGLTEEEVESMDSVELREKIEVVRNRFVENGAHFTIETMQELENIIEHIEKQELIIS.

The active-site Nucleophile is the D9. Mg(2+) is bound by residues D9 and A11. Residue K50 is the Schiff-base intermediate with substrate of the active site. D183 is a binding site for Mg(2+).

This sequence belongs to the HAD-like hydrolase superfamily. PhnX family. In terms of assembly, homodimer. The cofactor is Mg(2+).

The catalysed reaction is phosphonoacetaldehyde + H2O = acetaldehyde + phosphate + H(+). Involved in phosphonate degradation. The polypeptide is Phosphonoacetaldehyde hydrolase (Bacillus cereus (strain G9842)).